A 229-amino-acid polypeptide reads, in one-letter code: Peroxiredoxin-like 2A (229 aa).

The thioredoxin fold stretch occupies residues 14 to 112; that stretch reads MWSIGAGALG…DQLGVPLYAV (99 aa). Residues C85 and C88 each act as redox-active in the active site.

This sequence belongs to the peroxiredoxin-like PRXL2 family. PRXL2A subfamily. Expressed in CSF1 and TNFSF11-stimulated CD14(+) peripheral blood mononuclear cells (PBMCs).

It localises to the cytoplasm. The protein localises to the secreted. Functionally, involved in redox regulation of the cell. Acts as an antioxidant. Inhibits TNFSF11-induced NFKB1 and JUN activation and osteoclast differentiation. May affect bone resorption and help to maintain bone mass. Acts as a negative regulator of macrophage-mediated inflammation by inhibiting macrophage production of inflammatory cytokines, probably through suppression of the MAPK signaling pathway. The sequence is that of Peroxiredoxin-like 2A from Homo sapiens (Human).